Reading from the N-terminus, the 241-residue chain is tRNA pseudouridine synthase A (241 aa).

The active-site Nucleophile is the Asp-52. Tyr-111 provides a ligand contact to substrate.

This sequence belongs to the tRNA pseudouridine synthase TruA family. Homodimer.

The enzyme catalyses uridine(38/39/40) in tRNA = pseudouridine(38/39/40) in tRNA. Functionally, formation of pseudouridine at positions 38, 39 and 40 in the anticodon stem and loop of transfer RNAs. This is tRNA pseudouridine synthase A from Ureaplasma urealyticum serovar 10 (strain ATCC 33699 / Western).